We begin with the raw amino-acid sequence, 83 residues long: Acylphosphatase (83 aa).

The Acylphosphatase-like domain occupies 1–83 (MIEGRVQRVG…TGDDWFEVRY (83 aa)). Active-site residues include Arg12 and Asn30.

Belongs to the acylphosphatase family.

It catalyses the reaction an acyl phosphate + H2O = a carboxylate + phosphate + H(+). This chain is Acylphosphatase (acyP), found in Synechococcus sp. (strain CC9605).